Reading from the N-terminus, the 372-residue chain is Tribbles homolog 1 (372 aa).

Disordered regions lie at residues 1-23 (MRVG…ALLF) and 52-86 (ECSS…GSAP). A compositionally biased stretch (pro residues) spans 59–75 (YLSPPGSPCSPQPPPAA). Residues 91–338 (IADYLLLPLA…APEILLHPWF (248 aa)) enclose the Protein kinase domain. A COP1-binding motif is present at residues 355–360 (DQIVPE).

It belongs to the protein kinase superfamily. CAMK Ser/Thr protein kinase family. Tribbles subfamily. In terms of assembly, monomer. Interacts (via protein kinase domain) with CEBPA. Interacts with COP1. As to expression, expressed in most human tissues with the highest levels in skeletal muscle, thyroid gland, pancreas, peripheral blood leukocytes, and bone marrow.

Functionally, adapter protein involved in protein degradation by interacting with COP1 ubiquitin ligase. The COP1-binding motif is masked by autoinhibitory interactions with the protein kinase domain. Serves to alter COP1 substrate specificity by directing the activity of COP1 toward CEBPA. Binds selectively the recognition sequence of CEBPA. Regulates myeloid cell differentiation by altering the expression of CEBPA in a COP1-dependent manner. Controls macrophage, eosinophil and neutrophil differentiation via the COP1-binding domain. Interacts with MAPK kinases and regulates activation of MAP kinases, but has no kinase activity. In Homo sapiens (Human), this protein is Tribbles homolog 1.